Here is a 372-residue protein sequence, read N- to C-terminus: Peptide chain release factor 1 (372 aa).

Q237 carries the post-translational modification N5-methylglutamine.

Belongs to the prokaryotic/mitochondrial release factor family. Post-translationally, methylated by PrmC. Methylation increases the termination efficiency of RF1.

The protein resides in the cytoplasm. Peptide chain release factor 1 directs the termination of translation in response to the peptide chain termination codons UAG and UAA. The protein is Peptide chain release factor 1 of Anaeromyxobacter sp. (strain Fw109-5).